Here is a 511-residue protein sequence, read N- to C-terminus: Phosphoenolpyruvate carboxylase (511 aa).

Belongs to the PEPCase type 2 family. In terms of assembly, homotetramer. Requires Mg(2+) as cofactor.

It carries out the reaction oxaloacetate + phosphate = phosphoenolpyruvate + hydrogencarbonate. In terms of biological role, catalyzes the irreversible beta-carboxylation of phosphoenolpyruvate (PEP) to form oxaloacetate (OAA), a four-carbon dicarboxylic acid source for the tricarboxylic acid cycle. In Saccharolobus islandicus (strain L.S.2.15 / Lassen #1) (Sulfolobus islandicus), this protein is Phosphoenolpyruvate carboxylase.